The following is a 660-amino-acid chain: Cysteine-rich receptor-like protein kinase 22 (660 aa).

Positions 1–24 are cleaved as a signal peptide; the sequence is MKQRSFLSILCFILLAFGVASVSA. 2 Gnk2-homologous domains span residues 25 to 128 and 137 to 250; these read QTCI…NISF and IEPQ…LFTF. Residues 25–294 lie on the Extracellular side of the membrane; it reads QTCIENRKYF…DSRGVSAGIV (270 aa). 7 N-linked (GlcNAc...) asparagine glycosylation sites follow: asparagine 37, asparagine 53, asparagine 105, asparagine 125, asparagine 191, asparagine 230, and asparagine 256. Pro residues predominate over residues 264 to 273; the sequence is KPPMNVPRPP. The segment at 264-283 is disordered; that stretch reads KPPMNVPRPPSVGHGANTTD. N-linked (GlcNAc...) asparagine glycosylation is found at asparagine 280 and asparagine 284. Residues 295-315 form a helical membrane-spanning segment; it reads VVITVPAVVIVLILVVLGFFI. Residues 316–660 are Cytoplasmic-facing; the sequence is CWRRKSLQRT…DPLSEGLESG (345 aa). Residues 353 to 632 enclose the Protein kinase domain; it reads FSKSNKLGEG…IVSMLTSNTI (280 aa). Residues 359 to 367 and lysine 381 each bind ATP; that span reads LGEGRFGEV. Tyrosine 426 carries the post-translational modification Phosphotyrosine. Aspartate 478 functions as the Proton acceptor in the catalytic mechanism. A Phosphoserine modification is found at serine 482. Phosphothreonine is present on threonine 518. Tyrosine 526 carries the phosphotyrosine modification.

Belongs to the protein kinase superfamily. Ser/Thr protein kinase family. CRK subfamily.

It is found in the membrane. It catalyses the reaction L-seryl-[protein] + ATP = O-phospho-L-seryl-[protein] + ADP + H(+). It carries out the reaction L-threonyl-[protein] + ATP = O-phospho-L-threonyl-[protein] + ADP + H(+). The protein is Cysteine-rich receptor-like protein kinase 22 (CRK22) of Arabidopsis thaliana (Mouse-ear cress).